A 120-amino-acid polypeptide reads, in one-letter code: UPF0102 protein Caur_2698 (120 aa).

Belongs to the UPF0102 family.

This chain is UPF0102 protein Caur_2698, found in Chloroflexus aurantiacus (strain ATCC 29366 / DSM 635 / J-10-fl).